A 58-amino-acid chain; its full sequence is Large ribosomal subunit protein bL32 (58 aa).

The interval 1–24 (MAVPKKKTSKSKRDKRKATWKRKA) is disordered.

The protein belongs to the bacterial ribosomal protein bL32 family.

This is Large ribosomal subunit protein bL32 from Synechococcus sp. (strain ATCC 27144 / PCC 6301 / SAUG 1402/1) (Anacystis nidulans).